The following is a 92-amino-acid chain: DNA/RNA-binding protein Alba (92 aa).

Residue K11 is modified to N6-acetyllysine.

This sequence belongs to the histone-like Alba family. In terms of processing, acetylated. Acetylation at Lys-11 decreases DNA-binding affinity.

The protein resides in the cytoplasm. The protein localises to the chromosome. In terms of biological role, binds double-stranded DNA tightly but without sequence specificity. Involved in DNA compaction. The polypeptide is DNA/RNA-binding protein Alba (Pyrobaculum islandicum (strain DSM 4184 / JCM 9189 / GEO3)).